A 259-amino-acid polypeptide reads, in one-letter code: Formate channel BtFdhC (259 aa).

Residues 1–26 (MAFHKPEQIAELVIEAGVQKVSQTLP) are Cytoplasmic-facing. Residues 27–47 (AMLILGFLGGAFISLGFLLNI) traverse the membrane as a helical segment. Residues 48-66 (RVLGNLPERWGSLVNVLGG) are Periplasmic-facing. Residues 67 to 97 (AVFPVGLMLVVLAGGELITGNMMSLSMALYA) form a helical membrane-spanning segment. The Cytoplasmic segment spans residues 98–108 (KKITLVSVLNN). The helical transmembrane segment at 109–130 (WVWITFMNFVGAIFVAYCFGHL) threads the bilayer. Topologically, residues 131–157 (GGLTEGDYLNKTVAIAEGKLHESFGRT) are periplasmic. The helical transmembrane segment at 158–176 (LILAIGCNWLVCLALWLAY) threads the bilayer. The Cytoplasmic segment spans residues 177–187 (GTSDFVGKIIG). The chain crosses the membrane as a helical span at residues 188–216 (IWIPIMAFVVIGFQQVVANMFVISAVIFA). Topologically, residues 217–227 (GHLTWMDLARN) are periplasmic. The chain crosses the membrane as a helical span at residues 228-250 (FVPVFIGNVIGGAGFVGFAYFAC). At 251-259 (YQKQHSNMK) the chain is on the cytoplasmic side.

Belongs to the FNT transporter (TC 1.A.16) family.

It is found in the cell inner membrane. It carries out the reaction formate(in) = formate(out). Acts as a formate transporter. The chain is Formate channel BtFdhC from Bacillus thuringiensis.